Reading from the N-terminus, the 403-residue chain is Tripartite motif-containing protein 59 (403 aa).

The segment at 10-60 adopts an RING-type zinc-finger fold; sequence CPICYSIFEDPRVLPCSHTFCRNCLENILQASGNFYIWRPLRIPLKCPNCR. The B box-type zinc finger occupies 92-134; that stretch reads PDIVTCPEHYRQPLNVYCLLDKKLVCGHCLTIGQHHGHPIDDL. Positions 97, 100, 120, and 126 each coordinate Zn(2+). Positions 163 to 246 form a coiled coil; sequence LIEKLKEQKS…ALTISLQEES (84 aa). A helical transmembrane segment spans residues 329–349; it reads ILNIVVVTLISVILMSILFFN.

Belongs to the TRIM/RBCC family. In terms of assembly, interacts with ECSIT.

It is found in the endoplasmic reticulum membrane. It catalyses the reaction S-ubiquitinyl-[E2 ubiquitin-conjugating enzyme]-L-cysteine + [acceptor protein]-L-lysine = [E2 ubiquitin-conjugating enzyme]-L-cysteine + N(6)-ubiquitinyl-[acceptor protein]-L-lysine.. It participates in protein modification; protein ubiquitination. E3 ubiquitin ligase involved in different processes such as development and immune response. Serves as a negative regulator for innate immune signaling pathways by suppressing RLR-induced activation of IRF3/7 and NF-kappa-B via interaction with adapter ECSIT. Regulates autophagy through modulating both the transcription and the ubiquitination of BECN1. On the one hand, regulates the transcription of BECN1 through negatively modulating the NF-kappa-B pathway. On the other hand, regulates TRAF6-mediated 'Lys-63'-linked ubiquitination of BECN1, thus affecting the formation of the BECN1-PIK3C3 complex. In addition, mediates 'Lys-48'-linked ubiquitination of TRAF6 and thereby promotes TRAF6 proteasomal degradation. Also acts as a critical regulator for early embryo development from blastocyst stage to gastrula through modulating F-actin assembly and WASH1 'Lys-63'-linked ubiquitination. This is Tripartite motif-containing protein 59 (TRIM59) from Homo sapiens (Human).